The sequence spans 265 residues: Homeobox protein engrailed-2-A (265 aa).

2 stretches are compositionally biased toward basic and acidic residues: residues Met-1–Glu-12 and Gly-102–Lys-115. Disordered stretches follow at residues Met-1 to His-38, Leu-75 to Gln-140, and Asp-156 to Thr-181. Residues Asp-122–Ser-136 are compositionally biased toward low complexity. The segment at residues Asp-176–Thr-235 is a DNA-binding region (homeobox).

This sequence belongs to the engrailed homeobox family.

Its subcellular location is the nucleus. This is Homeobox protein engrailed-2-A (en2-a) from Xenopus laevis (African clawed frog).